The sequence spans 488 residues: Dihydrolipoyl dehydrogenase, mitochondrial (488 aa).

A mitochondrion-targeting transit peptide spans 1–25 (MLRINRISNLRTFGQRFFSTEQQDV). FAD contacts are provided by residues 52 to 61 (EKRGKLGGTC), Lys-70, Gly-134, and 163 to 165 (TGS). Cys-61 and Cys-66 are joined by a disulfide. Residues 200 to 207 (GGGVIGLE), Glu-223, Val-257, and Gly-294 each bind NAD(+). FAD contacts are provided by residues Asp-335 and 341–344 (MLAH). The active-site Proton acceptor is His-467.

It belongs to the class-I pyridine nucleotide-disulfide oxidoreductase family. FAD serves as cofactor.

Its subcellular location is the mitochondrion matrix. It carries out the reaction N(6)-[(R)-dihydrolipoyl]-L-lysyl-[protein] + NAD(+) = N(6)-[(R)-lipoyl]-L-lysyl-[protein] + NADH + H(+). This chain is Dihydrolipoyl dehydrogenase, mitochondrial (lpd), found in Dictyostelium discoideum (Social amoeba).